The chain runs to 172 residues: Adenine phosphoribosyltransferase (172 aa).

This sequence belongs to the purine/pyrimidine phosphoribosyltransferase family. In terms of assembly, homodimer.

It is found in the cytoplasm. The catalysed reaction is AMP + diphosphate = 5-phospho-alpha-D-ribose 1-diphosphate + adenine. It functions in the pathway purine metabolism; AMP biosynthesis via salvage pathway; AMP from adenine: step 1/1. In terms of biological role, catalyzes a salvage reaction resulting in the formation of AMP, that is energically less costly than de novo synthesis. In Methanococcus maripaludis (strain DSM 14266 / JCM 13030 / NBRC 101832 / S2 / LL), this protein is Adenine phosphoribosyltransferase.